Here is a 330-residue protein sequence, read N- to C-terminus: G-protein coupled receptor 157 (330 aa).

Over 1–15 the chain is Extracellular; that stretch reads MPTPAPPTELLPWER. The chain crosses the membrane as a helical span at residues 16–36; the sequence is AVVLLSCVLSALGSGLLVATH. The Cytoplasmic portion of the chain corresponds to 37–48; that stretch reads ALWPDLRSRARR. A helical membrane pass occupies residues 49-69; the sequence is LLLFLSLADLLSAASYFYGVL. Topologically, residues 70 to 87 are extracellular; that stretch reads QDFAGTSWDCVLQGALST. A helical membrane pass occupies residues 88 to 108; sequence FANTSSFFWTVAIALYLYLNI. The Cytoplasmic segment spans residues 109–119; that stretch reads VRATRGPCTDH. Residues 120–140 traverse the membrane as a helical segment; that stretch reads LVWAFHLISWGVPLAITVAAV. Topologically, residues 141-166 are extracellular; that stretch reads CLKKIGYDASDVSVGWCWINLEAEDR. Residues 167 to 187 form a helical membrane-spanning segment; it reads VLWMLLTGKLWEMLAYILLPL. At 188-227 the chain is on the cytoplasmic side; it reads LYLLVRKHINRAHQALSEYRPIWEGRQLQRGSPTSMADKK. A helical membrane pass occupies residues 228–250; the sequence is LILIPFIFICLRVWSTVRFVLTL. Residues 251–259 lie on the Extracellular side of the membrane; that stretch reads CGSPVVQAP. A helical transmembrane segment spans residues 260–282; sequence VLVVLHGIGNTFQGGANCIMFVL. Residues 283 to 330 lie on the Cytoplasmic side of the membrane; it reads CTRAVRTRLFSLCCCYPRPPTQNPPGASIPPKMGESQESRRTPEVPST. The segment at 303–330 is disordered; it reads TQNPPGASIPPKMGESQESRRTPEVPST. Residues 317–330 show a composition bias toward basic and acidic residues; that stretch reads ESQESRRTPEVPST.

The protein belongs to the G-protein coupled receptor 2 family.

It localises to the cell projection. The protein localises to the cilium membrane. Its function is as follows. Orphan receptor that promotes neuronal differentiation of radial glial progenitors (RGPs). The activity of this receptor is mediated by a G(q)-protein that activates a phosphatidylinositol-calcium second messenger. The polypeptide is G-protein coupled receptor 157 (Gpr157) (Rattus norvegicus (Rat)).